A 387-amino-acid chain; its full sequence is Probable 1-alkyl-2-acetylglycerophosphocholine esterase (387 aa).

An N-terminal signal peptide occupies residues 1-17 (MLVQGTIICALVANAIA). 2 N-linked (GlcNAc...) asparagine glycosylation sites follow: asparagine 51 and asparagine 141. The active-site Nucleophile is serine 227. Aspartate 250 acts as the Charge relay system in catalysis. The N-linked (GlcNAc...) asparagine glycan is linked to asparagine 283. Catalysis depends on histidine 313, which acts as the Charge relay system.

Belongs to the AB hydrolase superfamily. Lipase family.

The protein localises to the secreted. The enzyme catalyses a 1-O-alkyl-2-acetyl-sn-glycero-3-phosphocholine + H2O = a 1-O-alkyl-sn-glycero-3-phosphocholine + acetate + H(+). This Arthroderma benhamiae (strain ATCC MYA-4681 / CBS 112371) (Trichophyton mentagrophytes) protein is Probable 1-alkyl-2-acetylglycerophosphocholine esterase.